The following is a 146-amino-acid chain: Hemoglobin subunit beta (146 aa).

Residues 2–146 form the Globin domain; it reads HWSAEEKQLI…VAHSLARVYH (145 aa). The heme b site is built by H63 and H92.

The protein belongs to the globin family. As to quaternary structure, heterotetramer of two alpha chains and two beta chains. In terms of tissue distribution, red blood cells.

Functionally, involved in oxygen transport from the lung to the various peripheral tissues. This chain is Hemoglobin subunit beta (HBB), found in Microcephalophis gracilis (Graceful small-headed sea snake).